A 515-amino-acid polypeptide reads, in one-letter code: Hyccin (515 aa).

A compositionally biased stretch (low complexity) spans 358-378 (STSQSALSNSSNTSSKNLLGK). Disordered stretches follow at residues 358 to 410 (STSQ…TQRA) and 491 to 515 (TDLP…LSTD). Positions 389-403 (AGREKEGETCREHLS) are enriched in basic and acidic residues. The span at 498–515 (KQPNQQRPPSISITLSTD) shows a compositional bias: polar residues.

Belongs to the Hyccin family. In terms of assembly, component of a phosphatidylinositol 4-kinase (PI4K) complex.

Its subcellular location is the cytoplasm. The protein localises to the cytosol. It localises to the cell membrane. In terms of biological role, component of a complex required to localize phosphatidylinositol 4-kinase (PI4K) to the plasma membrane. The complex acts as a regulator of phosphatidylinositol 4-phosphate (PtdIns(4)P) synthesis. The polypeptide is Hyccin (HYCC1) (Gallus gallus (Chicken)).